The chain runs to 507 residues: Probable DNA ligase (507 aa).

E209 contacts ATP. K211 acts as the N6-AMP-lysine intermediate in catalysis. Residues R216, R231, E260, F295, R366, and K372 each contribute to the ATP site.

The protein belongs to the ATP-dependent DNA ligase family. Mg(2+) serves as cofactor.

It carries out the reaction ATP + (deoxyribonucleotide)n-3'-hydroxyl + 5'-phospho-(deoxyribonucleotide)m = (deoxyribonucleotide)n+m + AMP + diphosphate.. DNA ligase that seals nicks in double-stranded DNA during DNA replication, DNA recombination and DNA repair. The sequence is that of Probable DNA ligase from Pseudarthrobacter chlorophenolicus (strain ATCC 700700 / DSM 12829 / CIP 107037 / JCM 12360 / KCTC 9906 / NCIMB 13794 / A6) (Arthrobacter chlorophenolicus).